The following is a 123-amino-acid chain: MNIPENLQYTAEHLWVRPDENGHWLAGITDHAQDLLGDIVYVEAPKPGTRLSAGQPCGLVESVKTGSDLHAPLDGTVTAINEALQITPEEINDRPYDAWIFSFEPEHAPTGLLSAAEYRALLG.

The Lipoyl-binding domain occupies 23-104 (HWLAGITDHA…PYDAWIFSFE (82 aa)). Lys-64 carries the N6-lipoyllysine modification.

Belongs to the GcvH family. As to quaternary structure, the glycine cleavage system is composed of four proteins: P, T, L and H. Requires (R)-lipoate as cofactor.

Its function is as follows. The glycine cleavage system catalyzes the degradation of glycine. The H protein shuttles the methylamine group of glycine from the P protein to the T protein. In Methylobacillus flagellatus (strain ATCC 51484 / DSM 6875 / VKM B-1610 / KT), this protein is Glycine cleavage system H protein.